The following is a 467-amino-acid chain: Serum response factor homolog B (467 aa).

Polar residues predominate over residues 1-15 (MELNMNQYDNIESND). 3 disordered regions span residues 1–38 (MELNMNQYDNIESNDSPPTPSSPGEEGNVEKKEKKSGR), 115–245 (NTPD…NNLT), and 301–467 (IQNI…PSDL). Residues 36–96 (SGRRKINIEF…GHVYTFATPK (61 aa)) enclose the MADS-box domain. A compositionally biased stretch (low complexity) spans 128 to 205 (NNNNGNNSNN…NNNNNNNNNN (78 aa)). Basic and acidic residues predominate over residues 206–220 (CKEEQNMNIPNERKS). Composition is skewed to low complexity over residues 222 to 245 (NNINNNNNNQNNNQNNNQNNNNLT), 301 to 334 (IQNISGGSGNNSNGYINGNGMNGNNNNNNNSNNI), 347 to 392 (GSNS…NSNN), and 401 to 440 (PSPIISQPLPSIPSPSSSSSNIGNSGYSSPFSTSFSYGGY). The segment covering 442–467 (QPFSRNYPLQSNIATNSTVSKAPSDL) has biased composition (polar residues).

The protein resides in the nucleus. The chain is Serum response factor homolog B (srfB) from Dictyostelium discoideum (Social amoeba).